The primary structure comprises 156 residues: ATP synthase subunit b (156 aa).

The chain crosses the membrane as a helical span at residues 7–27 (LFVQAIVFLILVLFTMKFVWP).

Belongs to the ATPase B chain family. In terms of assembly, F-type ATPases have 2 components, F(1) - the catalytic core - and F(0) - the membrane proton channel. F(1) has five subunits: alpha(3), beta(3), gamma(1), delta(1), epsilon(1). F(0) has three main subunits: a(1), b(2) and c(10-14). The alpha and beta chains form an alternating ring which encloses part of the gamma chain. F(1) is attached to F(0) by a central stalk formed by the gamma and epsilon chains, while a peripheral stalk is formed by the delta and b chains.

The protein localises to the cell inner membrane. Functionally, f(1)F(0) ATP synthase produces ATP from ADP in the presence of a proton or sodium gradient. F-type ATPases consist of two structural domains, F(1) containing the extramembraneous catalytic core and F(0) containing the membrane proton channel, linked together by a central stalk and a peripheral stalk. During catalysis, ATP synthesis in the catalytic domain of F(1) is coupled via a rotary mechanism of the central stalk subunits to proton translocation. In terms of biological role, component of the F(0) channel, it forms part of the peripheral stalk, linking F(1) to F(0). The chain is ATP synthase subunit b from Paracidovorax citrulli (strain AAC00-1) (Acidovorax citrulli).